The chain runs to 70 residues: Bowman-Birk type proteinase inhibitor A-II (70 aa).

Cystine bridges form between cysteine 11/cysteine 68, cysteine 12/cysteine 29, cysteine 15/cysteine 63, cysteine 17/cysteine 27, cysteine 36/cysteine 43, cysteine 40/cysteine 55, and cysteine 45/cysteine 53.

Belongs to the Bowman-Birk serine protease inhibitor family.

These proteins inhibit trypsin and chymotrypsin, having 2 sites of interaction with trypsin. The site of interaction with chymotrypsin has not been determined but is not independent of the trypsin-reactive sites. This chain is Bowman-Birk type proteinase inhibitor A-II, found in Arachis hypogaea (Peanut).